A 300-amino-acid chain; its full sequence is Acetylglutamate kinase (300 aa).

Substrate contacts are provided by residues 68-69 (GG), R90, and N194.

This sequence belongs to the acetylglutamate kinase family. ArgB subfamily.

Its subcellular location is the cytoplasm. The enzyme catalyses N-acetyl-L-glutamate + ATP = N-acetyl-L-glutamyl 5-phosphate + ADP. It functions in the pathway amino-acid biosynthesis; L-arginine biosynthesis; N(2)-acetyl-L-ornithine from L-glutamate: step 2/4. In terms of biological role, catalyzes the ATP-dependent phosphorylation of N-acetyl-L-glutamate. The protein is Acetylglutamate kinase of Methanocaldococcus jannaschii (strain ATCC 43067 / DSM 2661 / JAL-1 / JCM 10045 / NBRC 100440) (Methanococcus jannaschii).